Here is a 98-residue protein sequence, read N- to C-terminus: Small ribosomal subunit protein eS24 (98 aa).

The protein belongs to the eukaryotic ribosomal protein eS24 family.

The sequence is that of Small ribosomal subunit protein eS24 from Thermococcus onnurineus (strain NA1).